A 1103-amino-acid chain; its full sequence is Platelet-derived growth factor receptor beta (1103 aa).

The signal sequence occupies residues 1–31 (MQVPGTMPAPVLKGQALWLPLLLMLSPQASG). Ig-like C2-type domains lie at 33 to 120 (LVIT…YIFV), 129 to 210 (PVDP…YSLQ), 214 to 309 (INVS…INVT), 331 to 403 (HRSR…HEDA), and 416 to 524 (PVRV…VTVV). The Extracellular segment spans residues 33 to 532 (LVITPPGPEL…VVPHSLPFKV (500 aa)). N-linked (GlcNAc...) asparagine glycosylation is found at N45 and N89. Cystine bridges form between C54–C100 and C149–C190. N-linked (GlcNAc...) asparagine glycosylation is found at N215 and N230. A disulfide bridge links C235 with C291. N-linked (GlcNAc...) asparagine glycans are attached at residues N292, N307, N354, N371, N468, and N479. Cysteines 436 and 508 form a disulfide. Residues 533–553 (VVISAILALVVLTIISLIILI) form a helical membrane-spanning segment. Residues 554-1103 (MLWQKKPRYE…PRAEAEDSFL (550 aa)) lie on the Cytoplasmic side of the membrane. Y562, Y579, and Y581 each carry phosphotyrosine; by autocatalysis. One can recognise a Protein kinase domain in the interval 600–962 (LVLGRTLGSG…QLVLLLERLL (363 aa)). ATP contacts are provided by residues 606–614 (LGSGAFGQV) and K634. Phosphotyrosine; by ABL1 and ABL2 is present on Y686. 7 positions are modified to phosphotyrosine; by autocatalysis: Y716, Y740, Y751, Y763, Y771, Y775, and Y778. Residue D826 is the Proton acceptor of the active site. Y857 is subject to Phosphotyrosine; by autocatalysis. Y934 and Y970 each carry phosphotyrosine; by ABL1 and ABL2. Y1009 and Y1021 each carry phosphotyrosine; by autocatalysis. The segment at 1017-1103 (GDNDYIIPLP…PRAEAEDSFL (87 aa)) is disordered. Residues 1039–1059 (SSPSLASSTLNEVNTSSTISC) show a composition bias toward polar residues. Positions 1065–1075 (PQEEPEPEPEP) are enriched in acidic residues. Positions 1076-1086 (QPEPQVVPEPP) are enriched in pro residues.

It belongs to the protein kinase superfamily. Tyr protein kinase family. CSF-1/PDGF receptor subfamily. As to quaternary structure, interacts with homodimeric PDGFB and PDGFD, and with heterodimers formed by PDGFA and PDGFB. May also interact with homodimeric PDGFC. Monomer in the absence of bound ligand. Interaction with homodimeric PDGFB, heterodimers formed by PDGFA and PDGFB or homodimeric PDGFD, leads to receptor dimerization, where both PDGFRA homodimers and heterodimers with PDGFRB are observed. Interacts with SH2B2/APS. Interacts directly (tyrosine phosphorylated) with SHB. Interacts (tyrosine phosphorylated) with PIK3R1 and RASA1. Interacts (tyrosine phosphorylated) with CBL. Interacts (tyrosine phosphorylated) with SRC and SRC family kinases. Interacts (tyrosine phosphorylated) with PIK3C2B, maybe indirectly. Interacts (tyrosine phosphorylated) with SHC1, GRB7, GRB10 and NCK1. Interaction with GRB2 is mediated by SHC1. Interacts (via C-terminus) with NHERF1. In terms of processing, N-glycosylated. Ubiquitinated. After autophosphorylation, the receptor is polyubiquitinated, leading to its degradation. Post-translationally, autophosphorylated on tyrosine residues upon ligand binding. Autophosphorylation occurs in trans, i.e. one subunit of the dimeric receptor phosphorylates tyrosine residues on the other subunit. Phosphorylation at Tyr-579, and to a lesser degree, Tyr-581 is important for interaction with SRC. Phosphorylation at Tyr-716 is important for interaction with GRB2. Phosphorylation at Tyr-740 and Tyr-751 is important for interaction with PIK3R1. Phosphorylation at Tyr-751 is important for interaction with NCK1. Phosphorylation at Tyr-771 and Tyr-857 is important for interaction with RASA1/GAP. Phosphorylation at Tyr-857 is important for efficient phosphorylation of PLCG1 and PTPN11, resulting in increased phosphorylation of AKT1, MAPK1/ERK2 and/or MAPK3/ERK1, PDCD6IP/ALIX and STAM, and in increased cell proliferation. Phosphorylation at Tyr-1009 is important for interaction with PTPN11. Phosphorylation at Tyr-1009 and Tyr-1021 is important for interaction with PLCG1. Dephosphorylated by PTPRJ at Tyr-751, Tyr-857, Tyr-1009 and Tyr-1021. Dephosphorylated by PTPN2 at Tyr-579 and Tyr-1021.

It is found in the cell membrane. The protein localises to the cytoplasmic vesicle. It localises to the lysosome lumen. The catalysed reaction is L-tyrosyl-[protein] + ATP = O-phospho-L-tyrosyl-[protein] + ADP + H(+). With respect to regulation, present in an inactive conformation in the absence of bound ligand. Binding of PDGFB and/or PDGFD leads to dimerization and activation by autophosphorylation on tyrosine residues. In terms of biological role, tyrosine-protein kinase that acts as a cell-surface receptor for homodimeric PDGFB and PDGFD and for heterodimers formed by PDGFA and PDGFB, and plays an essential role in the regulation of embryonic development, cell proliferation, survival, differentiation, chemotaxis and migration. Plays an essential role in blood vessel development by promoting proliferation, migration and recruitment of pericytes and smooth muscle cells to endothelial cells. Plays a role in the migration of vascular smooth muscle cells and the formation of neointima at vascular injury sites. Required for normal development of the cardiovascular system. Required for normal recruitment of pericytes (mesangial cells) in the kidney glomerulus, and for normal formation of a branched network of capillaries in kidney glomeruli. Promotes rearrangement of the actin cytoskeleton and the formation of membrane ruffles. Binding of its cognate ligands - homodimeric PDGFB, heterodimers formed by PDGFA and PDGFB or homodimeric PDGFD -leads to the activation of several signaling cascades; the response depends on the nature of the bound ligand and is modulated by the formation of heterodimers between PDGFRA and PDGFRB. Phosphorylates PLCG1, PIK3R1, PTPN11, RASA1/GAP, CBL, SHC1 and NCK1. Activation of PLCG1 leads to the production of the cellular signaling molecules diacylglycerol and inositol 1,4,5-trisphosphate, mobilization of cytosolic Ca(2+) and the activation of protein kinase C. Phosphorylation of PIK3R1, the regulatory subunit of phosphatidylinositol 3-kinase, leads to the activation of the AKT1 signaling pathway. Phosphorylation of SHC1, or of the C-terminus of PTPN11, creates a binding site for GRB2, resulting in the activation of HRAS, RAF1 and down-stream MAP kinases, including MAPK1/ERK2 and/or MAPK3/ERK1. Promotes phosphorylation and activation of SRC family kinases. Promotes phosphorylation of PDCD6IP/ALIX and STAM. Receptor signaling is down-regulated by protein phosphatases that dephosphorylate the receptor and its down-stream effectors, and by rapid internalization of the activated receptor. This chain is Platelet-derived growth factor receptor beta (PDGFRB), found in Canis lupus familiaris (Dog).